A 616-amino-acid chain; its full sequence is Carboxylic acid transporter protein homolog (616 aa).

Residues 1-11 show a composition bias toward basic and acidic residues; sequence MSSSITDEKIS. The interval 1–65 is disordered; sequence MSSSITDEKI…LYHNPSLPAQ (65 aa). N-acetylserine is present on S2. Residues 2–140 are Cytoplasmic-facing; sequence SSSITDEKIS…LRKMTWQNWN (139 aa). S4 is modified (phosphoserine). K9 participates in a covalent cross-link: Glycyl lysine isopeptide (Lys-Gly) (interchain with G-Cter in ubiquitin). Phosphoserine occurs at positions 11, 61, and 66. T70 carries the phosphothreonine modification. A helical membrane pass occupies residues 141–161; sequence YFFMGYFAWLSAAWAFFCVSV. Residues 162 to 176 are Extracellular-facing; it reads SVAPLAELYDRPTKD. Residues 177–197 traverse the membrane as a helical segment; it reads ITWGLGLVLFVRSAGAVIFGL. At 198–205 the chain is on the cytoplasmic side; sequence WTDKSSRK. A helical transmembrane segment spans residues 206–226; sequence WPYITCLFLFVIAQLCTPWCD. Residues 227 to 230 lie on the Extracellular side of the membrane; sequence TYEK. A helical transmembrane segment spans residues 231–251; that stretch reads FLGVRWITGIAMGGIYGCASA. Topologically, residues 252-263 are cytoplasmic; the sequence is TAIEDAPVKARS. Residues 264-284 traverse the membrane as a helical segment; the sequence is FLSGLFFSAYAMGFIFAIIFY. The Extracellular segment spans residues 285 to 296; that stretch reads RAFGYFRDDGWK. Residues 297–317 traverse the membrane as a helical segment; the sequence is ILFWFSIFLPILLIFWRLLWP. At 318-363 the chain is on the cytoplasmic side; the sequence is ETKYFTKVLKARKLILSDAVKANGGEPLPKANFKQKMVSMKRTVQK. K338 participates in a covalent cross-link: Glycyl lysine isopeptide (Lys-Gly) (interchain with G-Cter in ubiquitin). Residues 364–384 form a helical membrane-spanning segment; that stretch reads YWLLFAYLVVLLVGPNYLTHA. Residues 385-402 are Extracellular-facing; sequence SQDLLPTMLRAQLGLSKD. Residues 403-423 form a helical membrane-spanning segment; it reads AVTVIVVVTNIGAICGGMIFG. Over 424 to 432 the chain is Cytoplasmic; that stretch reads QFMEVTGRR. A helical membrane pass occupies residues 433–453; it reads LGLLIACTMGGCFTYPAFMLR. At 454-457 the chain is on the extracellular side; it reads SEKA. Residues 458-478 form a helical membrane-spanning segment; that stretch reads ILGAGFMLYFCVFGVWGILPI. Residues 479 to 489 are Cytoplasmic-facing; the sequence is HLAELAPADAR. A helical transmembrane segment spans residues 490–510; the sequence is ALVAGLSYQLGNLASAAASTI. Over 511 to 535 the chain is Extracellular; that stretch reads ETQLADRYPLERDASGAVIKEDYAK. The helical transmembrane segment at 536–556 threads the bilayer; that stretch reads VMAILTGSVFIFTFACVFVGH. Over 557–616 the chain is Cytoplasmic; sequence EKFHRDLSSPVMKKYINQVEEYEADGLSISDIVEQKTECASVKMIDSNVSKTYEEHIETV. Phosphoserine occurs at positions 584, 603, and 606.

The protein belongs to the major facilitator superfamily. Sugar transporter (TC 2.A.1.1) family.

It is found in the membrane. Essential to lactate transport. The protein is Carboxylic acid transporter protein homolog (JEN1) of Saccharomyces cerevisiae (strain ATCC 204508 / S288c) (Baker's yeast).